The primary structure comprises 408 residues: MQRIENINAATMTDDKGYGLIQDATVIINKGKIEFVGAAFDAPATPTAEVIDGNGGLLTPGLIDCHTHLVWAGSRANEFAQRLHGASYQEIAEQGGGIKSTVKATREASAEELLTLALERAETLMSQGVTTIEVKSGYGLDLENERKQLTVARQLAEQLPVNIKTTLLAAHAVPPEFKDNADGYIEEIIQNILPTLANEGLVDAVDAFCESIGFSPAQTEKVFKTAKDLELPIKLHAEQITNQKGAKLAADYQALSADHLEQLDEEGVKAMAENGTVAVLLPGAFYFLRDTQKPPVELLRKHGVPMAIATDANPGSSPIHNLPLMLQMAATFFHMTPEECLRGVTVNAAKALGENQRGVIAEGCYADLALWSCKDAAELTYQFGVNPLKTLWFNGVAHDRVSKPWSAR.

H66 and H68 together coordinate Fe(3+). Zn(2+)-binding residues include H66 and H68. Positions 75, 138, and 171 each coordinate 4-imidazolone-5-propanoate. Y138 serves as a coordination point for N-formimidoyl-L-glutamate. H236 lines the Fe(3+) pocket. Position 236 (H236) interacts with Zn(2+). Residue Q239 coordinates 4-imidazolone-5-propanoate. D311 serves as a coordination point for Fe(3+). Residue D311 coordinates Zn(2+). N-formimidoyl-L-glutamate contacts are provided by N313 and G315. S316 lines the 4-imidazolone-5-propanoate pocket.

The protein belongs to the metallo-dependent hydrolases superfamily. HutI family. Requires Zn(2+) as cofactor. Fe(3+) serves as cofactor.

The protein localises to the cytoplasm. It catalyses the reaction 4-imidazolone-5-propanoate + H2O = N-formimidoyl-L-glutamate. The protein operates within amino-acid degradation; L-histidine degradation into L-glutamate; N-formimidoyl-L-glutamate from L-histidine: step 3/3. In terms of biological role, catalyzes the hydrolytic cleavage of the carbon-nitrogen bond in imidazolone-5-propanoate to yield N-formimidoyl-L-glutamate. It is the third step in the universal histidine degradation pathway. The protein is Imidazolonepropionase of Idiomarina loihiensis (strain ATCC BAA-735 / DSM 15497 / L2-TR).